We begin with the raw amino-acid sequence, 140 residues long: MLRDRNRSGVRGGAEGPSQRQRRVAEDLRHRLAELFARTEFRDPELAGVHITVAEVRMSPDLKHATVFVSRLGATDIDRYLPALKRIAPFLRGEIGHGLRMKFVPDLHFQPDHALDEATRINELLHRPEVMRDLLKPDEE.

The interval 1 to 23 (MLRDRNRSGVRGGAEGPSQRQRR) is disordered.

Belongs to the RbfA family. As to quaternary structure, monomer. Binds 30S ribosomal subunits, but not 50S ribosomal subunits or 70S ribosomes.

The protein localises to the cytoplasm. Functionally, one of several proteins that assist in the late maturation steps of the functional core of the 30S ribosomal subunit. Associates with free 30S ribosomal subunits (but not with 30S subunits that are part of 70S ribosomes or polysomes). Required for efficient processing of 16S rRNA. May interact with the 5'-terminal helix region of 16S rRNA. The protein is Ribosome-binding factor A of Acidiphilium cryptum (strain JF-5).